The sequence spans 422 residues: Zinc finger protein Gfi-1 (422 aa).

An SNAG domain region spans residues 1–20 (MPRSFLVKSKKAHSYHQPRS). Positions 1–107 (MPRSFLVKSK…SPASEKSVCP (107 aa)) are disordered. S20 carries the post-translational modification Phosphoserine. Residues 34–47 (APGGADGTSSAGGA) are compositionally biased toward low complexity. Residue S56 is modified to Phosphoserine. The span at 57–72 (PESQLTEAPDRSSASP) shows a compositional bias: polar residues. Positions 140–257 (RPCAALDRGA…LLLGGGSYKC (118 aa)) are required for interaction with RELA. 6 consecutive C2H2-type zinc fingers follow at residues 255–278 (YKCI…RRSH), 284–306 (FACE…KAVH), 312–334 (FDCK…LLIH), 340–362 (YPCQ…TFIH), 368–390 (HKCQ…SRKH), and 396–419 (FGCD…ETQH).

As to quaternary structure, interacts with U2AF1L4. Component of RCOR-GFI-KDM1A-HDAC complexes. Interacts directly with RCOR1, KDM1A and HDAC2. Also interacts with HDAC1 and HDAC3. Interacts (via the zinc-finger domain) with ARIH2; the interaction prevents GFI1 ubiquitination and proteasomal degradation. Interacts with PIAS3; the interaction relieves the inhibitory effect of PIAS3 on STAT3-mediated transcriptional activity. Forms a complex with EHMT2 and HDAC1 to promote 'Lys-9' dimethylation of H3 (H3K9Me2) and repress expression of target genes. Interacts directly with EHMT2. Component of the GFI1-AJUBA-HDAC1 repressor complex. Interacts directly with AJUBA (via ITS LIM domains); the interaction results in the HDAC-dependent corepression of a subset of GFI1 target genes and, occurs independently of the SNAG domain. Interacts with SPI1; the interaction inhibits SPI1 transcriptional activity targeted at macrophage-specific genes, repressing macrophage differentiation of myeloid progenitor cells and promoting granulocyte commitment. Interacts with RUNX1T1; the interaction represses HDAC-mediated transcriptional activity. Interacts with RELA; the interaction occurs on liposaccharide (LPS) stimulation and controls RELA DNA binding activity and regulates endotoxin-mediated TOLL-like receptor inflammatory response. Interacts (via the C-terminal zinc fingers) with ZBTB17; the interaction results in the recruitment of GFI1 to the CDKN1A/p21 and CDKNIB promoters and repression of transcription. In terms of processing, ubiquitinated.

The protein localises to the nucleus. Transcription repressor essential for hematopoiesis. Functions in a cell-context and development-specific manner. Binds to 5'-TAAATCAC[AT]GCA-3' in the promoter region of a large number of genes. Component of several complexes, including the EHMT2-GFI1-HDAC1, AJUBA-GFI1-HDAC1 and RCOR-GFI-KDM1A-HDAC complexes, that suppress, via histone deacetylase (HDAC) recruitment, a number of genes implicated in multilineage blood cell development. Regulates neutrophil differentiation, promotes proliferation of lymphoid cells, and is required for granulocyte development. Inhibits SPI1 transcriptional activity at macrophage-specific genes, repressing macrophage differentiation of myeloid progenitor cells and promoting granulocyte commitment. Mediates, together with U2AF1L4, the alternative splicing of CD45 and controls T-cell receptor signaling. Regulates the endotoxin-mediated Toll-like receptor (TLR) inflammatory response by antagonizing RELA. Cooperates with CBFA2T2 to regulate ITGB1-dependent neurite growth. Controls cell-cycle progression by repressing CDKNIA/p21 transcription in response to TGFB1 via recruitment of GFI1 by ZBTB17 to the CDKNIA/p21 and CDKNIB promoters. Required for the maintenance of inner ear hair cells. In addition to its role in transcription, acts as a substrate adapter for PRMT1 in the DNA damage response: facilitates the recognition of TP53BP1 and MRE11 substrates by PRMT1, promoting their methylation and the DNA damage response. The protein is Zinc finger protein Gfi-1 (GFI1) of Canis lupus familiaris (Dog).